Consider the following 403-residue polypeptide: Alkaline protease 1 (403 aa).

A signal peptide spans 1–21 (MQSIKRTLLLLGALLPAALAA). The propeptide occupies 22-125 (PAREPHPSSN…QIWYLDALTT (104 aa)). In terms of domain architecture, Inhibitor I9 spans 36 to 120 (KYIITFKSGI…HVEEDQIWYL (85 aa)). The Peptidase S8 domain occupies 130–403 (PWGLGSISHK…PNKLAYNGAA (274 aa)). Catalysis depends on charge relay system residues aspartate 162 and histidine 193. N-linked (GlcNAc...) asparagine glycosylation is found at asparagine 253 and asparagine 307. The active-site Charge relay system is the serine 349.

The protein belongs to the peptidase S8 family.

Its subcellular location is the secreted. It carries out the reaction Hydrolysis of proteins with broad specificity, and of Bz-Arg-OEt &gt; Ac-Tyr-OEt. Does not hydrolyze peptide amides.. In terms of biological role, secreted alkaline protease that allows assimilation of proteinaceous substrates. The sequence is that of Alkaline protease 1 (alp1) from Aspergillus clavatus (strain ATCC 1007 / CBS 513.65 / DSM 816 / NCTC 3887 / NRRL 1 / QM 1276 / 107).